The sequence spans 28 residues: U15-ctenitoxin-Co1a (28 aa).

2 disulfide bridges follow: C3–C17 and C10–C22.

In terms of tissue distribution, expressed by the venom gland.

The protein resides in the secreted. Insecticidal neurotoxin that reversibly inhibits the N-methyl-D-aspartate (NMDA)-subtype of ionotropic glutamate receptor (GRIN) and inhibits inactivation of insect sodium channels (Nav). In vivo, is highly toxic to insects. The chain is U15-ctenitoxin-Co1a from Ctenus ornatus (Brazilian spider).